Consider the following 447-residue polypeptide: ATP-dependent protease ATPase subunit HslU (447 aa).

ATP is bound by residues I17, 59-64, D256, E321, and R393; that span reads GVGKTE.

It belongs to the ClpX chaperone family. HslU subfamily. In terms of assembly, a double ring-shaped homohexamer of HslV is capped on each side by a ring-shaped HslU homohexamer. The assembly of the HslU/HslV complex is dependent on binding of ATP.

The protein localises to the cytoplasm. Its function is as follows. ATPase subunit of a proteasome-like degradation complex; this subunit has chaperone activity. The binding of ATP and its subsequent hydrolysis by HslU are essential for unfolding of protein substrates subsequently hydrolyzed by HslV. HslU recognizes the N-terminal part of its protein substrates and unfolds these before they are guided to HslV for hydrolysis. This chain is ATP-dependent protease ATPase subunit HslU, found in Pseudomonas putida (strain ATCC 47054 / DSM 6125 / CFBP 8728 / NCIMB 11950 / KT2440).